We begin with the raw amino-acid sequence, 117 residues long: Small ribosomal subunit protein eS25 (117 aa).

Residues 1–34 (MPPKKDPKGGKAPPSKKKEGSGGGKAKKKKWSKG) form a disordered region. The segment covering 25-34 (KAKKKKWSKG) has biased composition (basic residues).

This sequence belongs to the eukaryotic ribosomal protein eS25 family.

This chain is Small ribosomal subunit protein eS25 (rps-25), found in Caenorhabditis elegans.